A 249-amino-acid chain; its full sequence is Transmembrane protein 150C (249 aa).

Residues 1 to 9 lie on the Cytoplasmic side of the membrane; that stretch reads MDGKKCSVW. The helical transmembrane segment at 10-30 threads the bilayer; the sequence is MFLPLVFTLFTSAGLWIVYFI. Topologically, residues 31–64 are extracellular; sequence AVEDDKILPLNSAERKPGVKHAPYISIAGDDPPA. The helical transmembrane segment at 65 to 85 threads the bilayer; sequence SCVFSQVMNMAAFLALVVAVL. At 86-97 the chain is on the cytoplasmic side; sequence RFIQLKPKVLNP. Residues 98–118 form a helical membrane-spanning segment; the sequence is WLNISGLVALCLASFGMTLLG. At 119 to 130 the chain is on the extracellular side; it reads NFQLTNDEEIHN. The chain crosses the membrane as a helical span at residues 131-151; it reads VGTSLTFGFGTLTCWIQAALT. Residues 152 to 168 are Cytoplasmic-facing; that stretch reads LKVNIKNEGRRVGIPRV. A helical membrane pass occupies residues 169-189; the sequence is ILSASITLCVVLYFILMAQSI. Residues 190 to 192 lie on the Extracellular side of the membrane; that stretch reads HMY. A helical membrane pass occupies residues 193-213; it reads AARVQWGLVMCFLSYFGTFAV. The Cytoplasmic portion of the chain corresponds to 214–249; sequence EFRHYRYEIVCSEYQENFLSFSESLSEASEYQTDQV.

It belongs to the DRAM/TMEM150 family.

It localises to the cell membrane. Its subcellular location is the lysosome membrane. The catalysed reaction is Ca(2+)(in) = Ca(2+)(out). The enzyme catalyses Na(+)(in) = Na(+)(out). It catalyses the reaction K(+)(in) = K(+)(out). It carries out the reaction Mg(2+)(in) = Mg(2+)(out). Its function is as follows. Nonselective cationic channel with high permeability to Ca(2+). Component of a mechanosensitive cation channel, confers mechanically activated (MA) currents with slow inactivation kinetics. May contribute to proprioception. The protein is Transmembrane protein 150C of Homo sapiens (Human).